Reading from the N-terminus, the 467-residue chain is Asparagine--tRNA ligase (467 aa).

Belongs to the class-II aminoacyl-tRNA synthetase family. Homodimer.

It localises to the cytoplasm. It catalyses the reaction tRNA(Asn) + L-asparagine + ATP = L-asparaginyl-tRNA(Asn) + AMP + diphosphate + H(+). In Phocaeicola vulgatus (strain ATCC 8482 / DSM 1447 / JCM 5826 / CCUG 4940 / NBRC 14291 / NCTC 11154) (Bacteroides vulgatus), this protein is Asparagine--tRNA ligase.